The primary structure comprises 46 residues: Photosystem II reaction center protein K (46 aa).

Residues 1–9 (MIDALVLVA) constitute a propeptide that is removed on maturation. At 10–19 (KLPEAYAIFD) the chain is on the lumenal side. A helical membrane pass occupies residues 20 to 39 (PLVDVLPVIPVLFLALAFVW). Residues 40–46 (QAAVGFR) are Cytoplasmic-facing.

The protein belongs to the PsbK family. As to quaternary structure, PSII is composed of 1 copy each of membrane proteins PsbA, PsbB, PsbC, PsbD, PsbE, PsbF, PsbH, PsbI, PsbJ, PsbK, PsbL, PsbM, PsbT, PsbX, PsbY, PsbZ, Psb30/Ycf12, peripheral proteins PsbO, CyanoQ(PsbQ), PsbU, PsbV and a large number of cofactors. It forms dimeric complexes. Part of a photosystem II (PSII) assembly intermediate complex PSII-I; crystallized from a strain deleted of psbJ, it forms monomeric PSII before addition of the oxygen evolving complex. PSII-I includes 3 assembly factors not found in mature PSII (Psb27, Psb28 and Psb34). It depends on PSII binds multiple chlorophylls, carotenoids and specific lipids. as a cofactor.

It localises to the cellular thylakoid membrane. Its function is as follows. One of the components of the core complex of photosystem II (PSII). PSII is a light-driven water:plastoquinone oxidoreductase that uses light energy to abstract electrons from H(2)O, generating O(2) and a proton gradient subsequently used for ATP formation. It consists of a core antenna complex that captures photons, and an electron transfer chain that converts photonic excitation into a charge separation. Required for association of PsbZ and Psb30/Ycf12 with PSII. The protein is Photosystem II reaction center protein K of Thermosynechococcus vestitus (strain NIES-2133 / IAM M-273 / BP-1).